The primary structure comprises 118 residues: UPF0295 protein BA_0538/GBAA_0538/BAS0506 (118 aa).

Transmembrane regions (helical) follow at residues 12–32 and 43–63; these read IRTF…LGVF and FMMV…WIGM.

The protein belongs to the UPF0295 family.

The protein resides in the cell membrane. This Bacillus anthracis protein is UPF0295 protein BA_0538/GBAA_0538/BAS0506.